We begin with the raw amino-acid sequence, 157 residues long: S-ribosylhomocysteine lyase (157 aa).

Fe cation-binding residues include His54, His58, and Cys124.

The protein belongs to the LuxS family. As to quaternary structure, homodimer. It depends on Fe cation as a cofactor.

The enzyme catalyses S-(5-deoxy-D-ribos-5-yl)-L-homocysteine = (S)-4,5-dihydroxypentane-2,3-dione + L-homocysteine. Its function is as follows. Involved in the synthesis of autoinducer 2 (AI-2) which is secreted by bacteria and is used to communicate both the cell density and the metabolic potential of the environment. The regulation of gene expression in response to changes in cell density is called quorum sensing. Catalyzes the transformation of S-ribosylhomocysteine (RHC) to homocysteine (HC) and 4,5-dihydroxy-2,3-pentadione (DPD). The polypeptide is S-ribosylhomocysteine lyase (Lactobacillus helveticus (strain DPC 4571)).